The following is a 143-amino-acid chain: Spore coat protein P (143 aa).

The 110-residue stretch at 34-143 (FFDSEASTFV…VETVAFNKGL (110 aa)) folds into the sHSP domain.

Belongs to the small heat shock protein (HSP20) family.

The polypeptide is Spore coat protein P (cotP) (Bacillus subtilis (strain 168)).